Consider the following 262-residue polypeptide: Putative BTB/POZ domain-containing protein L834 (262 aa).

The BTB domain occupies 16–86; the sequence is FDVVVELTDE…FYKKNIQPCI (71 aa).

The protein belongs to the mimivirus BTB/WD family.

This chain is Putative BTB/POZ domain-containing protein L834, found in Acanthamoeba polyphaga (Amoeba).